Consider the following 273-residue polypeptide: Coiled-coil domain-containing protein 122 (273 aa).

Residues Met-1–Asn-17 show a composition bias toward basic and acidic residues. The interval Met-1 to Ser-39 is disordered. 2 coiled-coil regions span residues Ala-24 to Glu-116 and Asn-179 to Ile-269.

In Homo sapiens (Human), this protein is Coiled-coil domain-containing protein 122 (CCDC122).